A 387-amino-acid polypeptide reads, in one-letter code: WD repeat-containing protein 89 (387 aa).

WD repeat units follow at residues 21 to 65 (KEPT…VLRE), 68 to 107 (GYPG…EKPV), 112 to 156 (GYPS…QDLS), 168 to 208 (THSD…EEDA), 214 to 254 (NSIS…TDEP), and 319 to 358 (GHAA…KTFT).

The sequence is that of WD repeat-containing protein 89 (WDR89) from Pongo abelii (Sumatran orangutan).